A 251-amino-acid chain; its full sequence is Ditrans,polycis-undecaprenyl-diphosphate synthase ((2E,6E)-farnesyl-diphosphate specific) (251 aa).

The active site involves D21. Mg(2+) is bound at residue D21. Substrate contacts are provided by residues 22–25 (GNNR), W26, H38, and 66–68 (SSE). N69 (proton acceptor) is an active-site residue. Substrate contacts are provided by residues W70, R72, R189, and 195–197 (RIS). E208 provides a ligand contact to Mg(2+).

Belongs to the UPP synthase family. Homodimer. Requires Mg(2+) as cofactor.

The enzyme catalyses 8 isopentenyl diphosphate + (2E,6E)-farnesyl diphosphate = di-trans,octa-cis-undecaprenyl diphosphate + 8 diphosphate. In terms of biological role, catalyzes the sequential condensation of isopentenyl diphosphate (IPP) with (2E,6E)-farnesyl diphosphate (E,E-FPP) to yield (2Z,6Z,10Z,14Z,18Z,22Z,26Z,30Z,34E,38E)-undecaprenyl diphosphate (di-trans,octa-cis-UPP). UPP is the precursor of glycosyl carrier lipid in the biosynthesis of bacterial cell wall polysaccharide components such as peptidoglycan and lipopolysaccharide. This chain is Ditrans,polycis-undecaprenyl-diphosphate synthase ((2E,6E)-farnesyl-diphosphate specific), found in Pseudomonas putida (strain ATCC 47054 / DSM 6125 / CFBP 8728 / NCIMB 11950 / KT2440).